Consider the following 299-residue polypeptide: ATP phosphoribosyltransferase (299 aa).

Belongs to the ATP phosphoribosyltransferase family. Long subfamily. Equilibrium between an active dimeric form, an inactive hexameric form and higher aggregates. Interconversion between the various forms is largely reversible and is influenced by the natural substrates and inhibitors of the enzyme. The cofactor is Mg(2+).

Its subcellular location is the cytoplasm. It carries out the reaction 1-(5-phospho-beta-D-ribosyl)-ATP + diphosphate = 5-phospho-alpha-D-ribose 1-diphosphate + ATP. It functions in the pathway amino-acid biosynthesis; L-histidine biosynthesis; L-histidine from 5-phospho-alpha-D-ribose 1-diphosphate: step 1/9. With respect to regulation, feedback inhibited by histidine. Its function is as follows. Catalyzes the condensation of ATP and 5-phosphoribose 1-diphosphate to form N'-(5'-phosphoribosyl)-ATP (PR-ATP). Has a crucial role in the pathway because the rate of histidine biosynthesis seems to be controlled primarily by regulation of HisG enzymatic activity. This is ATP phosphoribosyltransferase from Salmonella dublin (strain CT_02021853).